The primary structure comprises 145 residues: MKMKPAERRRARQSAVQAIYQWQITKLSAGQIIEQFSTDQDLSKTDVPYFKELLTGVIHRVDFLDEKLSPYLSRKIEDVDMVDKAVLRLAMFELTQRTDIPHKVVLNEAIELAKDFATDESYKFVNGVLDKALRSLKLREEEQGK.

This sequence belongs to the NusB family.

Involved in transcription antitermination. Required for transcription of ribosomal RNA (rRNA) genes. Binds specifically to the boxA antiterminator sequence of the ribosomal RNA (rrn) operons. This is Transcription antitermination protein NusB from Psychromonas ingrahamii (strain DSM 17664 / CCUG 51855 / 37).